Here is a 90-residue protein sequence, read N- to C-terminus: [Phe8]-phyllolitorin (90 aa).

A signal peptide spans 1-30 (MSAVPFTRVLLISGFLAHLLLSTFVTLTVC). Residues 31–48 (KEVTEESDDLSKRNVLQR) constitute a propeptide that is removed on maturation. A Pyrrolidone carboxylic acid modification is found at Gln49. Residue Met57 is modified to Methionine amide. Positions 61 to 90 (SLENTNRRSDEDMEISALFRGSPLKVKRSD) are excised as a propeptide.

The protein belongs to the bombesin/neuromedin-B/ranatensin family. In terms of tissue distribution, expressed by the skin glands.

Its subcellular location is the secreted. In Phyllomedusa sauvagei (Sauvage's leaf frog), this protein is [Phe8]-phyllolitorin.